Here is a 242-residue protein sequence, read N- to C-terminus: Sensory transduction protein LytT (242 aa).

The 115-residue stretch at H2 to S116 folds into the Response regulatory domain. Residues I137–L241 enclose the HTH LytTR-type domain.

Post-translationally, phosphorylated by LytS.

The protein localises to the cytoplasm. Functionally, member of the two-component regulatory system LytS/LytT that probably regulates genes involved in cell wall metabolism. This Enterococcus faecalis (strain ATCC 700802 / V583) protein is Sensory transduction protein LytT (lytT).